The primary structure comprises 452 residues: Gastrin/cholecystokinin type B receptor (452 aa).

The tract at residues 1–21 (MELLKLNRSVQGPGPGSGSSL) is disordered. At 1 to 57 (MELLKLNRSVQGPGPGSGSSLCRPGVSLLNSSSAGNLSCDPPRIRGTGTRELEMAIR) the chain is on the extracellular side. N-linked (GlcNAc...) asparagine glycans are attached at residues Asn7, Asn30, and Asn36. Residues 58–79 (ITLYAVIFLMSVGGNVLIIVVL) traverse the membrane as a helical segment. At 80–87 (GLSRRLRT) the chain is on the cytoplasmic side. Residues 88–109 (VTNAFLLSLAVSDLLLAVACMP) traverse the membrane as a helical segment. Residues 110-131 (FTLLPNLMGTFIFGTVICKAIS) are Extracellular-facing. The cysteines at positions 127 and 205 are disulfide-linked. Residues 132-150 (YLMGVSVSVSTLNLVAIAL) form a helical membrane-spanning segment. The Cytoplasmic segment spans residues 151-170 (ERYSAICRPLQARVWQTRSH). Residues 171-189 (AARVILATWLLSGLLMVPY) traverse the membrane as a helical segment. Topologically, residues 190–219 (PVYTMVQPVGPRVLQCMHRWPSARVQQTWS) are extracellular. Residues 220-242 (VLLLLLLFFIPGVVIAVAYGLIS) form a helical membrane-spanning segment. The Cytoplasmic segment spans residues 243-338 (RELYLGLHFD…KLLAKKRVVR (96 aa)). A disordered region spans residues 257–286 (SETQSRARNQGGLPGGAAPGPVHQNGGCRP). A helical transmembrane segment spans residues 339–360 (MLLVIVLLFFLCWLPVYSVNTW). Over 361-378 (RAFDGPGAQRALSGAPIS) the chain is Extracellular. Residues 379–399 (FIHLLSYVSACVNPLVYCFMH) traverse the membrane as a helical segment. Residues 400–452 (RRFRQACLDTCARCCPRPPRARPQPLPDEDPPTPSIASLSRLSYTTISTLGPG) are Cytoplasmic-facing. A lipid anchor (S-palmitoyl cysteine) is attached at Cys413. The disordered stretch occupies residues 421–452 (RPQPLPDEDPPTPSIASLSRLSYTTISTLGPG). Residues 434 to 452 (SIASLSRLSYTTISTLGPG) show a composition bias toward polar residues.

Belongs to the G-protein coupled receptor 1 family. In terms of tissue distribution, parietal cells, pancreas, brain and various neoplastic tissues.

The protein localises to the cell membrane. In terms of biological role, receptor for gastrin and cholecystokinin. The CCK-B receptors occur throughout the central nervous system where they modulate anxiety, analgesia, arousal, and neuroleptic activity. This receptor mediates its action by association with G proteins that activate a phosphatidylinositol-calcium second messenger system. This Rattus norvegicus (Rat) protein is Gastrin/cholecystokinin type B receptor (Cckbr).